The chain runs to 64 residues: Alpha-conotoxin CnIL (64 aa).

An N-terminal signal peptide occupies residues 1–21 (MGMRMMFTVFLLVVLTTTVVS). Positions 22-49 (FPSDSASDGRDDEAKDERSDIYESKRDG) are excised as a propeptide. 2 cysteine pairs are disulfide-bonded: cysteine 51–cysteine 56 and cysteine 52–cysteine 62. Cysteine 62 carries the cysteine amide modification.

It belongs to the conotoxin A superfamily. As to expression, expressed by the venom duct.

Its subcellular location is the secreted. This is Alpha-conotoxin CnIL from Conus consors (Singed cone).